The following is a 77-amino-acid chain: Large ribosomal subunit protein bL28 (77 aa).

The protein belongs to the bacterial ribosomal protein bL28 family.

This chain is Large ribosomal subunit protein bL28, found in Ralstonia pickettii (strain 12J).